The chain runs to 500 residues: Probable malate:quinone oxidoreductase (500 aa).

Belongs to the MQO family. FAD serves as cofactor.

It catalyses the reaction (S)-malate + a quinone = a quinol + oxaloacetate. It functions in the pathway carbohydrate metabolism; tricarboxylic acid cycle; oxaloacetate from (S)-malate (quinone route): step 1/1. The polypeptide is Probable malate:quinone oxidoreductase (Bacillus cereus (strain B4264)).